The following is a 1512-amino-acid chain: DNA (cytosine-5)-methyltransferase 2 (1512 aa).

Residues 1 to 22 show a composition bias toward basic and acidic residues; it reads METKVGKQKKRSVDSNDDVSKE. Disordered regions lie at residues 1-35 and 634-678; these read METKVGKQKKRSVDSNDDVSKERRPKRAAACRNFK and AIHE…GNSE. Residues 638 to 662 are compositionally biased toward acidic residues; the sequence is VEEEEIEEDEEEDENEEDDIEEEAV. 2 BAH domains span residues 707–841 and 909–1026; these read ETVA…FSLP and TTLK…KQFP. Residues 1071-1505 enclose the SAM-dependent MTase C5-type domain; sequence LATLDIFAGC…RKLKEALYLK (435 aa). Cys1176 is a catalytic residue.

Belongs to the class I-like SAM-binding methyltransferase superfamily. C5-methyltransferase family. Expressed at low levels in vegetative and floral organs.

It is found in the nucleus. The catalysed reaction is a 2'-deoxycytidine in DNA + S-adenosyl-L-methionine = a 5-methyl-2'-deoxycytidine in DNA + S-adenosyl-L-homocysteine + H(+). Maintains chromatin CpG methylation that plays a role in genomic imprinting, regulation of embryogenesis and seed viability. Required for proper patterns of CG DNA methylation in dividing cells. This is DNA (cytosine-5)-methyltransferase 2 (MET2) from Arabidopsis thaliana (Mouse-ear cress).